The following is a 107-amino-acid chain: UPF0145 protein ESA_02470 (107 aa).

This sequence belongs to the UPF0145 family.

In Cronobacter sakazakii (strain ATCC BAA-894) (Enterobacter sakazakii), this protein is UPF0145 protein ESA_02470.